Consider the following 387-residue polypeptide: TPR repeat-containing protein SYNPCC7002_A0425 (387 aa).

TPR repeat units lie at residues 63-96 (LNALLEQGNEQLTNRNFAQAVQHYRQALTLEANN), 97-130 (ARIHGALGYALSQLGNYSEAVTAYRRATELEDDN), 132-164 (EFFNALGFNLAQSGDNRSAINAYQRATQLQPNN), 166-198 (AYSLGLATVQFRAGDYDQALVAYRKVLAKDSNN), 200-232 (MALQNSLTSLLQLGRNQEAAVLFPDLLRQRPND), 233-266 (AELRIKAAVTWFGLNDRDQAIAFLEEARRLSTRD), 267-300 (SAMQIRVGKIYETQNLLPQAIAAYEQASFVDPQS), 302-334 (EAFALYGSAAMKTEDYINAIIAYRALTELSPTD), and 336-368 (AAFYNFAVALQGRRRSREALEALEMARDLYQQR).

This is TPR repeat-containing protein SYNPCC7002_A0425 from Picosynechococcus sp. (strain ATCC 27264 / PCC 7002 / PR-6) (Agmenellum quadruplicatum).